We begin with the raw amino-acid sequence, 119 residues long: Protein TraH (119 aa).

Positions 1–67 (MSNPNEMTDE…ALDESRRPKA (67 aa)) are disordered. The span at 41–54 (APSAPAEPSHSASP) shows a compositional bias: low complexity.

In terms of biological role, the initiation process of transfer DNA synthesis requires the interaction of at least three plasmid-specific components (TraH, TraI, and TraJ) at the transfer origin resulting in the assembly of a specialized nucleoprotein complex - the relaxosome. This is Protein TraH (traH) from Escherichia coli.